The following is a 244-amino-acid chain: Probable hydrolase R7 (244 aa).

The first 20 residues, 1–20 (MTKPFILLVPGSFAPETIYA), serve as a signal peptide directing secretion. Active-site charge relay system residues include aspartate 192 and histidine 224. A glycan (N-linked (GlcNAc...) asparagine) is linked at asparagine 227.

This sequence belongs to the AB hydrolase superfamily.

It functions in the pathway secondary metabolite biosynthesis. In terms of biological role, probable hydrolase; part of the gene cluster that mediates the biosynthesis of squalestatin S1 (SQS1, also known as zaragozic acid A), a lead compound for the treatment of hyper-cholesterolemia by targeting squalene synthase (SS). Both phenylalanine and benzoic acid are known precursors of SQS1 and so it is unsurprising that the cluster also contains genes potentially involved in benzoate production such as phenyl-alanine ammonia lysase (PAL) M7, which catalyzes the first step in the degradation of phenylalanine, or the NADP-dependent dehydrogenase M3. The cluster contains two PKS encoding genes. The tetraketide synthase is responsible for the biosynthesis of the tetraketide sidechain of SQS1. The biosynthesis must involve 3 rounds of chain extension. After the first and second rounds methyl-transfer occurs, and in all rounds of extension the ketoreductase and dehydratase areactive. The enoyl reductase and C-MeT are not active in the final round of extension. The other PKS is therefore likely to encode squalestatin hexaketide synthase (SQHKS). The hexaketide main chain is initiated by benzoate which is an unusual starter unit for a highly reducing polyketide synthase. The cluster also contains a gene encoding a citrate synthase-like protein R3 presumably involved in linking the hexaketide to the oxaloacetate moiety. Formation of the tetraketide CoA may be catalyzed by the M9 CoA ligase, but the mechanism of release of the tetraketide and the hexaketide from their respective PKS remains unknown, although the cluster encodes a potential esterase (M8) and a possible hydrolase (M10) which could be involved in these processes. Two acyltransferases (AT), M4 and R4, are also encoded in the cluster. M4 is responsible for loading of the tetraketide sidechain from CoA onto the squalestatin core as the final step of biosynthesis. M4 appears to have a broad substrate selectivity for its acyl CoA substrate, allowing the in vitro synthesis of novel squalestatins. The biosynthesis of SQS1 requires several oxidative steps likely performed by oxidoreductases M1, R1 and R2. Finally, in support of the identification of the cluster as being responsible for SQS1 production, the cluster contains a gene encoding a putative squalene synthase (SS) R6, suggesting a likely mechanism for self-resistance. In Phoma sp. (strain ATCC 20986 / MF5453), this protein is Probable hydrolase R7.